The following is a 314-amino-acid chain: Triosephosphate isomerase, chloroplastic (314 aa).

The segment covering 1 to 22 (MAVASTSLASQLSGPKSLSQPY) has biased composition (polar residues). The interval 1 to 25 (MAVASTSLASQLSGPKSLSQPYSGL) is disordered. The transit peptide at 1-59 (MAVASTSLASQLSGPKSLSQPYSGLRRSCPKLDQSHSSLFQHLSLSSSSRKASRAVVAM) directs the protein to the chloroplast. Positions 70 and 72 each coordinate substrate. H154 serves as the catalytic Electrophile. The active-site Proton acceptor is E224.

It belongs to the triosephosphate isomerase family. In terms of assembly, homodimer.

The protein resides in the plastid. Its subcellular location is the chloroplast. The catalysed reaction is D-glyceraldehyde 3-phosphate = dihydroxyacetone phosphate. It functions in the pathway carbohydrate biosynthesis; Calvin cycle. In Fragaria ananassa (Strawberry), this protein is Triosephosphate isomerase, chloroplastic (TPI).